Consider the following 106-residue polypeptide: UPF0060 membrane protein RL1530 (106 aa).

4 helical membrane passes run 4 to 24 (IIFAFAALFEIAGCFAFWAWL), 30 to 50 (VWWLAPGMVSLALFAWILTLV), 58 to 78 (TFAAYGGIYILASLLWLWLVE), and 86 to 106 (DIGGALICLAGASLILFAPRG).

The protein belongs to the UPF0060 family.

The protein localises to the cell inner membrane. This is UPF0060 membrane protein RL1530 from Rhizobium johnstonii (strain DSM 114642 / LMG 32736 / 3841) (Rhizobium leguminosarum bv. viciae).